Reading from the N-terminus, the 570-residue chain is Proline--tRNA ligase (570 aa).

It belongs to the class-II aminoacyl-tRNA synthetase family. ProS type 1 subfamily. In terms of assembly, homodimer.

The protein localises to the cytoplasm. It carries out the reaction tRNA(Pro) + L-proline + ATP = L-prolyl-tRNA(Pro) + AMP + diphosphate. Its function is as follows. Catalyzes the attachment of proline to tRNA(Pro) in a two-step reaction: proline is first activated by ATP to form Pro-AMP and then transferred to the acceptor end of tRNA(Pro). As ProRS can inadvertently accommodate and process non-cognate amino acids such as alanine and cysteine, to avoid such errors it has two additional distinct editing activities against alanine. One activity is designated as 'pretransfer' editing and involves the tRNA(Pro)-independent hydrolysis of activated Ala-AMP. The other activity is designated 'posttransfer' editing and involves deacylation of mischarged Ala-tRNA(Pro). The misacylated Cys-tRNA(Pro) is not edited by ProRS. The polypeptide is Proline--tRNA ligase (Clostridium tetani (strain Massachusetts / E88)).